The chain runs to 219 residues: 2-phospho-L-lactate guanylyltransferase (219 aa).

The protein belongs to the CofC family. As to quaternary structure, homodimer.

It carries out the reaction (2S)-2-phospholactate + GTP + H(+) = (2S)-lactyl-2-diphospho-5'-guanosine + diphosphate. It functions in the pathway cofactor biosynthesis; coenzyme F420 biosynthesis. Functionally, guanylyltransferase that catalyzes the activation of (2S)-2-phospholactate (2-PL) as (2S)-lactyl-2-diphospho-5'-guanosine, via the condensation of 2-PL with GTP. It is involved in the biosynthesis of coenzyme F420, a hydride carrier cofactor. The sequence is that of 2-phospho-L-lactate guanylyltransferase from Methanocella arvoryzae (strain DSM 22066 / NBRC 105507 / MRE50).